Consider the following 381-residue polypeptide: tRNA (guanine(26)-N(2))-dimethyltransferase (381 aa).

The 372-residue stretch at 7 to 378 (IEVQEGKAKI…APYEVFIETI (372 aa)) folds into the Trm1 methyltransferase domain. Residues arginine 39, arginine 64, aspartate 81, aspartate 123, and alanine 124 each coordinate S-adenosyl-L-methionine.

It belongs to the class I-like SAM-binding methyltransferase superfamily. Trm1 family.

The catalysed reaction is guanosine(26) in tRNA + 2 S-adenosyl-L-methionine = N(2)-dimethylguanosine(26) in tRNA + 2 S-adenosyl-L-homocysteine + 2 H(+). Its function is as follows. Dimethylates a single guanine residue at position 26 of a number of tRNAs using S-adenosyl-L-methionine as donor of the methyl groups. This is tRNA (guanine(26)-N(2))-dimethyltransferase from Pyrococcus horikoshii (strain ATCC 700860 / DSM 12428 / JCM 9974 / NBRC 100139 / OT-3).